We begin with the raw amino-acid sequence, 361 residues long: Serine/threonine-protein kinase SRK2B (361 aa).

Residues 4 to 260 (YELVKDIGAG…IGDIKKHPWF (257 aa)) form the Protein kinase domain. Residues 10–18 (IGAGNFGVA) and K33 each bind ATP. D123 acts as the Proton acceptor in catalysis. S154 carries the phosphoserine modification. Residues 311–361 (AFGWGGGEDAEGKEEDAEEEVEEVEEEEDEEDEYDKTVKQVHASMGEVRVS) form a disordered region. The span at 318–344 (EDAEGKEEDAEEEVEEVEEEEDEEDEY) shows a compositional bias: acidic residues.

It belongs to the protein kinase superfamily. Ser/Thr protein kinase family. As to expression, expressed in seedlings.

The catalysed reaction is L-seryl-[protein] + ATP = O-phospho-L-seryl-[protein] + ADP + H(+). The enzyme catalyses L-threonyl-[protein] + ATP = O-phospho-L-threonyl-[protein] + ADP + H(+). The polypeptide is Serine/threonine-protein kinase SRK2B (SRK2B) (Arabidopsis thaliana (Mouse-ear cress)).